The primary structure comprises 528 residues: Glucosidase 2 subunit beta (528 aa).

The N-terminal stretch at 1 to 14 is a signal peptide; that stretch reads MLLPLLLLLPMCWA. Ser-24 bears the Phosphoserine; by FAM20C mark. 2 consecutive LDL-receptor class A domains span residues 37–71 and 72–113; these read FTCLDGSATIPFDQVNDDYCDCKDGSDEPGTAACP and NGSF…VICE. 2 cysteine pairs are disulfide-bonded: Cys-39-Cys-58 and Cys-56-Cys-70. Asp-49 serves as a coordination point for substrate. Ca(2+) contacts are provided by Gln-50, Asp-53, Tyr-55, Asp-57, Asp-63, and Glu-64. A substrate-binding site is contributed by Asp-53. N-linked (GlcNAc...) asparagine glycosylation is present at Asn-72. 3 disulfide bridges follow: Cys-77–Cys-99, Cys-97–Cys-112, and Cys-100–Cys-116. The residue at position 89 (Ser-89) is a Phosphoserine; by PKC. The Ca(2+) site is built by Arg-91, Asp-94, Val-96, Asp-98, Asp-104, and Glu-105. Residue Lys-166 is modified to N6-succinyllysine. Ser-168 carries the post-translational modification Phosphoserine; by FAM20C. EF-hand domains lie at 209–244 and 245–290; these read QEQELAADAFKELDDDMDGTVSVTELQTHPELDTDG and DGAL…TDLP. Residues Asp-222, Asp-224, Asp-226, Thr-228, and Glu-233 each contribute to the Ca(2+) site. 2 disordered regions span residues 234–266 and 281–357; these read LQTHPELDTDGDGALSEAEAQALLSGDTQTDAT and RSEA…DKMP. Residues 247–258 are compositionally biased toward low complexity; that stretch reads ALSEAEAQALLS. Residues 312-337 are compositionally biased toward acidic residues; that stretch reads TEEEEEEEEEEEEEAEEEEEEEDSEE. Residues 338–348 show a composition bias toward pro residues; that stretch reads APPPLSPPQPA. 2 positions are modified to phosphoserine; by PKC: Ser-383 and Ser-390. The MRH domain occupies 413–514; that stretch reads SQCYELTTNE…ELMTPAACPE (102 aa). Cys-415 and Cys-428 are disulfide-bonded. Ser-434 carries the phosphoserine; by PKC modification. Disulfide bonds link Cys-471-Cys-500 and Cys-485-Cys-512. N-linked (GlcNAc...) asparagine glycosylation is present at Asn-476. A Prevents secretion from ER motif is present at residues 525 to 528; it reads HDEL.

In terms of assembly, heterodimer of a catalytic alpha subunit (GANAB) and a beta subunit (PRKCSH). Binds glycosylated PTPRC.

The protein localises to the endoplasmic reticulum. The protein operates within glycan metabolism; N-glycan metabolism. Functionally, regulatory subunit of glucosidase II that cleaves sequentially the 2 innermost alpha-1,3-linked glucose residues from the Glc(2)Man(9)GlcNAc(2) oligosaccharide precursor of immature glycoproteins. Required for efficient PKD1/Polycystin-1 biogenesis and trafficking to the plasma membrane of the primary cilia. In Homo sapiens (Human), this protein is Glucosidase 2 subunit beta.